An 814-amino-acid chain; its full sequence is G-type lectin S-receptor-like serine/threonine-protein kinase At1g61370 (814 aa).

The signal sequence occupies residues 1 to 25 (MGKIGIVFFASLLFLLIIFPSCAFA). The Bulb-type lectin domain maps to 26–145 (AITRASPLSI…VSERNLWESF (120 aa)). Residues 26–433 (AITRASPLSI…SELAGSNRVK (408 aa)) are Extracellular-facing. Residues Asn43, Asn54, Asn89, Asn95, Asn253, and Asn271 are each glycosylated (N-linked (GlcNAc...) asparagine). An EGF-like domain is found at 282-318 (PVSSCDVYNTCGPFGLCIRSNPPKCECLKGFVPKSDE). Cystine bridges form between Cys286-Cys298 and Cys292-Cys306. Residues Asn324, Asn334, Asn340, and Asn383 are each glycosylated (N-linked (GlcNAc...) asparagine). In terms of domain architecture, PAN spans 337 to 423 (CDVNSSATAQ…GETLSIRLAS (87 aa)). Intrachain disulfides connect Cys376–Cys397 and Cys380–Cys386. A helical membrane pass occupies residues 434 to 454 (IIVASIVSISVFMILVFASYW). Topologically, residues 455-814 (YWRYKAKQND…NITQTAIVGR (360 aa)) are cytoplasmic. Residues 501–786 (FSMENKLGQG…DLPKPKQPVF (286 aa)) enclose the Protein kinase domain. ATP-binding positions include 507 to 515 (LGQGGFGPV) and Lys529. A phosphoserine mark is found at Ser535 and Ser550. Residues 590-607 (TKKLELDWPKRFEIIQGI) form a caM-binding region. Asp626 (proton acceptor) is an active-site residue. Phosphoserine is present on residues Ser630 and Ser643. A Phosphothreonine modification is found at Thr660. 4 positions are modified to phosphoserine: Ser703, Ser704, Ser797, and Ser802. Thr809 carries the phosphothreonine modification.

This sequence belongs to the protein kinase superfamily. Ser/Thr protein kinase family.

The protein resides in the cell membrane. It catalyses the reaction L-seryl-[protein] + ATP = O-phospho-L-seryl-[protein] + ADP + H(+). The catalysed reaction is L-threonyl-[protein] + ATP = O-phospho-L-threonyl-[protein] + ADP + H(+). The polypeptide is G-type lectin S-receptor-like serine/threonine-protein kinase At1g61370 (Arabidopsis thaliana (Mouse-ear cress)).